The sequence spans 198 residues: Nucleoid occlusion factor SlmA (198 aa).

An HTH tetR-type domain is found at 10 to 70; sequence NRREEILQSL…SLIEFIEDSL (61 aa). A DNA-binding region (H-T-H motif) is located at residues 33–52; that stretch reads TTAKLAASVGVSEAALYRHF. Residues 117–144 adopt a coiled-coil conformation; the sequence is EQDRLQGRINQLFERIEAQLRQVLREKR.

This sequence belongs to the nucleoid occlusion factor SlmA family. Homodimer. Interacts with FtsZ.

Its subcellular location is the cytoplasm. The protein localises to the nucleoid. Its function is as follows. Required for nucleoid occlusion (NO) phenomenon, which prevents Z-ring formation and cell division over the nucleoid. Acts as a DNA-associated cell division inhibitor that binds simultaneously chromosomal DNA and FtsZ, and disrupts the assembly of FtsZ polymers. SlmA-DNA-binding sequences (SBS) are dispersed on non-Ter regions of the chromosome, preventing FtsZ polymerization at these regions. The sequence is that of Nucleoid occlusion factor SlmA from Escherichia coli O127:H6 (strain E2348/69 / EPEC).